The sequence spans 489 residues: Betaine aldehyde dehydrogenase (489 aa).

2 residues coordinate K(+): T26 and D93. 150–152 is an NAD(+) binding site; the sequence is GAW. K162 (charge relay system) is an active-site residue. NAD(+) is bound at residue 176–179; that stretch reads KPSE. V180 lines the K(+) pocket. 229-232 contacts NAD(+); sequence GVET. K(+) is bound at residue L245. E251 (proton acceptor) is an active-site residue. 3 residues coordinate NAD(+): G253, C285, and E386. The active-site Nucleophile is C285. C285 carries the cysteine sulfenic acid (-SOH) modification. The K(+) site is built by K456 and G459. The active-site Charge relay system is E463.

Belongs to the aldehyde dehydrogenase family. As to quaternary structure, dimer of dimers. It depends on K(+) as a cofactor.

The enzyme catalyses betaine aldehyde + NAD(+) + H2O = glycine betaine + NADH + 2 H(+). The protein operates within amine and polyamine biosynthesis; betaine biosynthesis via choline pathway; betaine from betaine aldehyde: step 1/1. In terms of biological role, involved in the biosynthesis of the osmoprotectant glycine betaine. Catalyzes the irreversible oxidation of betaine aldehyde to the corresponding acid. The polypeptide is Betaine aldehyde dehydrogenase (Burkholderia cenocepacia (strain ATCC BAA-245 / DSM 16553 / LMG 16656 / NCTC 13227 / J2315 / CF5610) (Burkholderia cepacia (strain J2315))).